The following is a 519-amino-acid chain: Putative ATP-dependent RNA helicase L396 (519 aa).

The Helicase ATP-binding domain occupies 110–258 (IKGMEEGGGG…IINWYMGPIL (149 aa)). 123 to 130 (MGCGSGKT) contacts ATP. The short motif at 211–214 (DEVH) is the DEAH box element. In terms of domain architecture, Helicase C-terminal spans 317-457 (YLIQELFDMG…KQKYNIQKYY (141 aa)).

Belongs to the DEAD box helicase family. DEAH subfamily.

The catalysed reaction is ATP + H2O = ADP + phosphate + H(+). The chain is Putative ATP-dependent RNA helicase L396 from Acanthamoeba polyphaga (Amoeba).